We begin with the raw amino-acid sequence, 450 residues long: Phosphoglucosamine mutase (450 aa).

S101 functions as the Phosphoserine intermediate in the catalytic mechanism. The Mg(2+) site is built by S101, D240, D242, and D244. Residue S101 is modified to Phosphoserine.

It belongs to the phosphohexose mutase family. Mg(2+) serves as cofactor. Post-translationally, activated by phosphorylation.

The enzyme catalyses alpha-D-glucosamine 1-phosphate = D-glucosamine 6-phosphate. Its function is as follows. Catalyzes the conversion of glucosamine-6-phosphate to glucosamine-1-phosphate. The protein is Phosphoglucosamine mutase of Streptococcus pneumoniae serotype 4 (strain ATCC BAA-334 / TIGR4).